The primary structure comprises 168 residues: Mediator of RNA polymerase II transcription subunit 7a (168 aa).

Coiled coils occupy residues 64–92 (KDSNLDYKNELRSLNRELQLHILELADVL) and 132–166 (IMELQIQQRKQAVEDIKRRREEAQRLLKDAYLTLD).

The protein belongs to the Mediator complex subunit 7 family. In terms of assembly, component of the Mediator complex. Interacts with MEE14/CBP1.

The protein localises to the nucleus. Its function is as follows. Component of the Mediator complex, a coactivator involved in the regulated transcription of nearly all RNA polymerase II-dependent genes. Mediator functions as a bridge to convey information from gene-specific regulatory proteins to the basal RNA polymerase II transcription machinery. The Mediator complex, having a compact conformation in its free form, is recruited to promoters by direct interactions with regulatory proteins and serves for the assembly of a functional pre-initiation complex with RNA polymerase II and the general transcription factors. The sequence is that of Mediator of RNA polymerase II transcription subunit 7a (MED7A) from Arabidopsis thaliana (Mouse-ear cress).